Here is a 379-residue protein sequence, read N- to C-terminus: ATP phosphoribosyltransferase regulatory subunit (379 aa).

This sequence belongs to the class-II aminoacyl-tRNA synthetase family. HisZ subfamily. In terms of assembly, heteromultimer composed of HisG and HisZ subunits.

It is found in the cytoplasm. The protein operates within amino-acid biosynthesis; L-histidine biosynthesis; L-histidine from 5-phospho-alpha-D-ribose 1-diphosphate: step 1/9. In terms of biological role, required for the first step of histidine biosynthesis. May allow the feedback regulation of ATP phosphoribosyltransferase activity by histidine. This is ATP phosphoribosyltransferase regulatory subunit from Paramagnetospirillum magneticum (strain ATCC 700264 / AMB-1) (Magnetospirillum magneticum).